The sequence spans 114 residues: Large ribosomal subunit protein uL24 (114 aa).

The protein belongs to the universal ribosomal protein uL24 family. In terms of assembly, part of the 50S ribosomal subunit.

Functionally, one of two assembly initiator proteins, it binds directly to the 5'-end of the 23S rRNA, where it nucleates assembly of the 50S subunit. In terms of biological role, one of the proteins that surrounds the polypeptide exit tunnel on the outside of the subunit. This Acidothermus cellulolyticus (strain ATCC 43068 / DSM 8971 / 11B) protein is Large ribosomal subunit protein uL24.